We begin with the raw amino-acid sequence, 279 residues long: Energy-coupling factor transporter ATP-binding protein EcfA1 (279 aa).

Residues V6–G240 form the ABC transporter domain. Position 40 to 47 (G40 to S47) interacts with ATP.

This sequence belongs to the ABC transporter superfamily. Energy-coupling factor EcfA family. In terms of assembly, forms a stable energy-coupling factor (ECF) transporter complex composed of 2 membrane-embedded substrate-binding proteins (S component), 2 ATP-binding proteins (A component) and 2 transmembrane proteins (T component).

It localises to the cell membrane. ATP-binding (A) component of a common energy-coupling factor (ECF) ABC-transporter complex. Unlike classic ABC transporters this ECF transporter provides the energy necessary to transport a number of different substrates. This is Energy-coupling factor transporter ATP-binding protein EcfA1 from Listeria monocytogenes serovar 1/2a (strain ATCC BAA-679 / EGD-e).